A 381-amino-acid polypeptide reads, in one-letter code: Alkanesulfonate monooxygenase (381 aa).

Belongs to the SsuD family. As to quaternary structure, homotetramer.

It carries out the reaction an alkanesulfonate + FMNH2 + O2 = an aldehyde + FMN + sulfite + H2O + 2 H(+). In terms of biological role, catalyzes the desulfonation of aliphatic sulfonates. This is Alkanesulfonate monooxygenase from Escherichia coli O6:K15:H31 (strain 536 / UPEC).